A 306-amino-acid chain; its full sequence is Ubiquitin-conjugating enzyme E2Q-like protein CG4502 (306 aa).

Residues 18–77 (HKSSNNNNNNNNNHNNNINNNNNNDKVDGATGSSPNINNNNNNNNNNNNHDGAAAPSSAG) form a disordered region. Composition is skewed to low complexity over residues 22 to 41 (NNNNNNNNNHNNNINNNNNN) and 53 to 77 (NINNNNNNNNNNNNHDGAAAPSSAG). The UBC core domain occupies 138 to 299 (IRTRRLMKEY…VKTHEKYGWV (162 aa)). The Glycyl thioester intermediate role is filled by cysteine 234.

This sequence belongs to the ubiquitin-conjugating enzyme family.

The enzyme catalyses S-ubiquitinyl-[E1 ubiquitin-activating enzyme]-L-cysteine + [E2 ubiquitin-conjugating enzyme]-L-cysteine = [E1 ubiquitin-activating enzyme]-L-cysteine + S-ubiquitinyl-[E2 ubiquitin-conjugating enzyme]-L-cysteine.. It functions in the pathway protein modification; protein ubiquitination. In terms of biological role, catalyzes the covalent attachment of ubiquitin to other proteins. The sequence is that of Ubiquitin-conjugating enzyme E2Q-like protein CG4502 from Drosophila melanogaster (Fruit fly).